Here is a 100-residue protein sequence, read N- to C-terminus: Small ribosomal subunit protein uS14 (100 aa).

Belongs to the universal ribosomal protein uS14 family. In terms of assembly, part of the 30S ribosomal subunit. Contacts proteins S3 and S10.

Binds 16S rRNA, required for the assembly of 30S particles and may also be responsible for determining the conformation of the 16S rRNA at the A site. This chain is Small ribosomal subunit protein uS14, found in Prochlorococcus marinus subsp. pastoris (strain CCMP1986 / NIES-2087 / MED4).